The following is a 266-amino-acid chain: 4-hydroxy-tetrahydrodipicolinate reductase (266 aa).

NAD(+) contacts are provided by residues 8–13 (GAAGRM) and Glu33. Position 34 (Arg34) interacts with NADP(+). NAD(+)-binding positions include 97–99 (GST) and 121–124 (APNM). His154 (proton donor/acceptor) is an active-site residue. His155 is a (S)-2,3,4,5-tetrahydrodipicolinate binding site. Lys158 serves as the catalytic Proton donor. 164-165 (GT) serves as a coordination point for (S)-2,3,4,5-tetrahydrodipicolinate.

This sequence belongs to the DapB family.

It localises to the cytoplasm. The enzyme catalyses (S)-2,3,4,5-tetrahydrodipicolinate + NAD(+) + H2O = (2S,4S)-4-hydroxy-2,3,4,5-tetrahydrodipicolinate + NADH + H(+). It carries out the reaction (S)-2,3,4,5-tetrahydrodipicolinate + NADP(+) + H2O = (2S,4S)-4-hydroxy-2,3,4,5-tetrahydrodipicolinate + NADPH + H(+). It participates in amino-acid biosynthesis; L-lysine biosynthesis via DAP pathway; (S)-tetrahydrodipicolinate from L-aspartate: step 4/4. Catalyzes the conversion of 4-hydroxy-tetrahydrodipicolinate (HTPA) to tetrahydrodipicolinate. This chain is 4-hydroxy-tetrahydrodipicolinate reductase, found in Geobacter sulfurreducens (strain ATCC 51573 / DSM 12127 / PCA).